The following is a 56-amino-acid chain: Large ribosomal subunit protein bL33 (56 aa).

This sequence belongs to the bacterial ribosomal protein bL33 family.

The sequence is that of Large ribosomal subunit protein bL33 from Marinomonas sp. (strain MWYL1).